We begin with the raw amino-acid sequence, 208 residues long: MKIERVNDNTVKFFITYTDIERRGFARDEIWYNRERGEQLFWQMMDEANEKESISFEGPLWIQVQAFEKGLEVTVTIAKTTIDGEQVDEDELDSLLRSAMSDAEEKETELSQDVLFETTDFEHIIALSQYAEAPIFEEVKTSLYQKDGLYLLHLHFKEETEVEEQENVMSLIAEYLNFSEQTIHPVAEYGKVIVPNDVFAFIRKHFPN.

It belongs to the MecA family. As to quaternary structure, homodimer.

In terms of biological role, enables the recognition and targeting of unfolded and aggregated proteins to the ClpC protease or to other proteins involved in proteolysis. The protein is Adapter protein MecA of Exiguobacterium sibiricum (strain DSM 17290 / CCUG 55495 / CIP 109462 / JCM 13490 / 255-15).